The following is a 299-amino-acid chain: F-actin-capping protein subunit alpha-3 (299 aa).

A Phosphoserine modification is found at Ser-290.

This sequence belongs to the F-actin-capping protein alpha subunit family. Component of the F-actin capping complex, composed of a heterodimer of an alpha and a beta subunit. Component of the WASH complex, composed of F-actin-capping protein subunit alpha (CAPZA1, CAPZA2 or CAPZA3), F-actin-capping protein subunit beta (CAPZB), WASHC1, WASHC2, WASHC3, WASHC4 and WASHC5.

In terms of biological role, F-actin-capping proteins bind in a Ca(2+)-independent manner to the fast growing ends of actin filaments (barbed end) thereby blocking the exchange of subunits at these ends. Unlike other capping proteins (such as gelsolin and severin), these proteins do not sever actin filaments. May play a role in the morphogenesis of spermatid. This is F-actin-capping protein subunit alpha-3 (CAPZA3) from Macaca fascicularis (Crab-eating macaque).